We begin with the raw amino-acid sequence, 829 residues long: Leucine--tRNA ligase (829 aa).

The short motif at 40–50 (PYPSGNIHMGH) is the 'HIGH' region element. The short motif at 594 to 598 (KMSKS) is the 'KMSKS' region element. Residue lysine 597 participates in ATP binding.

This sequence belongs to the class-I aminoacyl-tRNA synthetase family.

It is found in the cytoplasm. It carries out the reaction tRNA(Leu) + L-leucine + ATP = L-leucyl-tRNA(Leu) + AMP + diphosphate. This Anaplasma marginale (strain St. Maries) protein is Leucine--tRNA ligase.